The sequence spans 443 residues: tRNA modification GTPase MnmE (443 aa).

(6S)-5-formyl-5,6,7,8-tetrahydrofolate-binding residues include Arg23, Glu80, and Lys120. One can recognise a TrmE-type G domain in the interval 217-367; that stretch reads GFEVVILGAP…LLAEIGRRAA (151 aa). Residues 227 to 232, 246 to 252, and 271 to 274 each bind GTP; these read NAGKSS, TDEPGTT, and DTAG. Residues Ser231 and Thr252 each coordinate Mg(2+). Lys443 provides a ligand contact to (6S)-5-formyl-5,6,7,8-tetrahydrofolate.

Belongs to the TRAFAC class TrmE-Era-EngA-EngB-Septin-like GTPase superfamily. TrmE GTPase family. Homodimer. Heterotetramer of two MnmE and two MnmG subunits. K(+) is required as a cofactor.

The protein localises to the cytoplasm. In terms of biological role, exhibits a very high intrinsic GTPase hydrolysis rate. Involved in the addition of a carboxymethylaminomethyl (cmnm) group at the wobble position (U34) of certain tRNAs, forming tRNA-cmnm(5)s(2)U34. In Mesorhizobium japonicum (strain LMG 29417 / CECT 9101 / MAFF 303099) (Mesorhizobium loti (strain MAFF 303099)), this protein is tRNA modification GTPase MnmE.